A 572-amino-acid chain; its full sequence is Proline--tRNA ligase (572 aa).

The protein belongs to the class-II aminoacyl-tRNA synthetase family. ProS type 1 subfamily. In terms of assembly, homodimer.

The protein resides in the cytoplasm. The enzyme catalyses tRNA(Pro) + L-proline + ATP = L-prolyl-tRNA(Pro) + AMP + diphosphate. Catalyzes the attachment of proline to tRNA(Pro) in a two-step reaction: proline is first activated by ATP to form Pro-AMP and then transferred to the acceptor end of tRNA(Pro). As ProRS can inadvertently accommodate and process non-cognate amino acids such as alanine and cysteine, to avoid such errors it has two additional distinct editing activities against alanine. One activity is designated as 'pretransfer' editing and involves the tRNA(Pro)-independent hydrolysis of activated Ala-AMP. The other activity is designated 'posttransfer' editing and involves deacylation of mischarged Ala-tRNA(Pro). The misacylated Cys-tRNA(Pro) is not edited by ProRS. This Haemophilus influenzae (strain 86-028NP) protein is Proline--tRNA ligase.